The sequence spans 270 residues: ATP synthase subunit a 1 (270 aa).

The next 5 helical transmembrane spans lie at 38–58 (VHID…GIFY), 98–118 (IAPL…MDLV), 143–163 (DVNI…YYSI), 208–228 (LFGN…MLPW), and 239–259 (AIFH…LTIV).

Belongs to the ATPase A chain family. In terms of assembly, F-type ATPases have 2 components, CF(1) - the catalytic core - and CF(0) - the membrane proton channel. CF(1) has five subunits: alpha(3), beta(3), gamma(1), delta(1), epsilon(1). CF(0) has three main subunits: a(1), b(2) and c(9-12). The alpha and beta chains form an alternating ring which encloses part of the gamma chain. CF(1) is attached to CF(0) by a central stalk formed by the gamma and epsilon chains, while a peripheral stalk is formed by the delta and b chains.

The protein localises to the cell inner membrane. Its function is as follows. Key component of the proton channel; it plays a direct role in the translocation of protons across the membrane. This Vibrio campbellii (strain ATCC BAA-1116) protein is ATP synthase subunit a 1.